The following is a 232-amino-acid chain: Small ribosomal subunit protein uS2 (232 aa).

Belongs to the universal ribosomal protein uS2 family.

This is Small ribosomal subunit protein uS2 from Pelotomaculum thermopropionicum (strain DSM 13744 / JCM 10971 / SI).